A 456-amino-acid chain; its full sequence is Sulfoacetaldehyde dehydrogenase (456 aa).

213–218 (GGTAAA) lines the NAD(+) pocket. Residues E233 and C267 contribute to the active site.

It belongs to the aldehyde dehydrogenase family. As to quaternary structure, homotetramer.

The catalysed reaction is sulfoacetaldehyde + NAD(+) + H2O = sulfoacetate + NADH + 2 H(+). In terms of biological role, mediates conversion of 2-sulfoacetaldehyde into sulfoacetate. The enzyme is specific for NAD; NADP is not a substrate. Part of a pathway that can utilize the amino group of taurine as a sole source of nitrogen for growth. This chain is Sulfoacetaldehyde dehydrogenase (safD), found in Neptuniibacter caesariensis.